We begin with the raw amino-acid sequence, 549 residues long: MTSHQPQPQEEQSPQRSTSGYPLQEVVDDEVSGPSAPGVDPSPPRRSLGCKRKRECLDESDDEPEKELAPEPEETWVAETLCGLKMKAKRRRVSLVLPEYYEAFNRLLAPGVDPSPPRRSLGCKRKRECLDESDDEPEKELAPEPEETWVAETLCGLKMKAKRRRVSLVLPEYYEAFNRLLAPGVDPSPPRRSLGCKRKRECLDESDDEPEKELAPEPEETWVAETLCGLKMKAKRRRVSLVLPEYYEAFNRLLAPGVDPSPPRRSLGCKRKRECLDESDDEPEKELAPEPEETWVAETLCGLKMKAKRRRVSLVLPEYYEAFNRLLAPGVDPSPPRRSLGCKRKRECLDESDDEPEKELAPEPEETWVAETLCGLKMKAKRRRVSLVLPEYYEAFNRLLEDPVIKRFLAWDKDLRVSDKYLLAMVIAYFSRAGLPSWQYQRIHFFLALYLANDMEEDDEAPKQKIFYFLYGKTHSHIPLRPKHWFQLCRPMNPRARKNCSQIALFQKRRFQFFCSMRCRAWVSPEELEEIQAYDPEHWVWARDRAHLS.

The span at 1 to 15 shows a compositional bias: low complexity; it reads MTSHQPQPQEEQSPQ. Disordered regions lie at residues 1–74, 126–145, 188–218, 261–291, and 334–364; these read MTSH…EPEE, KRECLDESDDEPEKELAPEP, and SPPRRSLGCKRKRECLDESDDEPEKELAPEP. Composition is skewed to acidic residues over residues 58-74, 131-145, 204-218, 277-291, and 350-364; these read DESDDEPEKELAPEPEE and DESDDEPEKELAPEP.

It belongs to the Speedy/Ringo family. Predominantly expressed in testis and spleen.

This chain is Speedy protein E3, found in Homo sapiens (Human).